The sequence spans 345 residues: Calcium/calmodulin-dependent protein kinase type 1 (345 aa).

Residues 1–23 (MPLFGSKKETAKKSSKKDKDEGK) form a disordered region. Residues 31-287 (YILKDLLGTG…CKQALGHPWI (257 aa)) enclose the Protein kinase domain. ATP-binding positions include 37–45 (LGTGAFSQV) and Lys61. Catalysis depends on Asp153, which acts as the Proton acceptor. The segment at 287-327 (ISGNAASTENIHSSVSEQLKKNFAKSRWRQAYHATAVIRQM) is autoinhibitory domain. Residues 307–328 (KNFAKSRWRQAYHATAVIRQMR) form a calmodulin-binding region.

The protein belongs to the protein kinase superfamily. CAMK Ser/Thr protein kinase family. CaMK subfamily. As to expression, highly expressed in hepatopancreas and to a lesser extent in gills. Low expression in hemocytes, testis, ovary, heart, eyestalk, muscle and epidermis.

The catalysed reaction is L-seryl-[protein] + ATP = O-phospho-L-seryl-[protein] + ADP + H(+). It carries out the reaction L-threonyl-[protein] + ATP = O-phospho-L-threonyl-[protein] + ADP + H(+). Activated by Ca(2+)/calmodulin. Binding of calmodulin results in conformational change that relieves intrasteric autoinhibition. Its function is as follows. Calcium/calmodulin-dependent protein kinase that operates in the calcium-triggered CaMKK-CaMK1 signaling cascade and, upon calcium influx, regulates transcription activators activity, cell cycle, hormone production, cell differentiation, actin filament organization and neurite outgrowth. Involved in molting. This chain is Calcium/calmodulin-dependent protein kinase type 1, found in Macrobrachium nipponense (Oriental river shrimp).